The primary structure comprises 688 residues: Potassium-transporting ATPase ATP-binding subunit (688 aa).

Transmembrane regions (helical) follow at residues 35 to 55 (VMFV…AMLA), 62 to 82 (ALFT…ANFA), 219 to 239 (IALT…CVTL), and 260 to 280 (VLIA…LSAI). D313 (4-aspartylphosphate intermediate) is an active-site residue. Residues D350, E354, 383–390 (FSAMTRMS), and K401 contribute to the ATP site. Residues D524 and D528 each contribute to the Mg(2+) site. 3 helical membrane passes run 594–614 (FAII…LNIM), 622–642 (AVLS…PLAL), and 667–687 (GLIA…LLIL).

It belongs to the cation transport ATPase (P-type) (TC 3.A.3) family. Type IA subfamily. As to quaternary structure, the system is composed of three essential subunits: KdpA, KdpB and KdpC.

It is found in the cell inner membrane. It carries out the reaction K(+)(out) + ATP + H2O = K(+)(in) + ADP + phosphate + H(+). Part of the high-affinity ATP-driven potassium transport (or Kdp) system, which catalyzes the hydrolysis of ATP coupled with the electrogenic transport of potassium into the cytoplasm. This subunit is responsible for energy coupling to the transport system and for the release of the potassium ions to the cytoplasm. This is Potassium-transporting ATPase ATP-binding subunit from Photorhabdus laumondii subsp. laumondii (strain DSM 15139 / CIP 105565 / TT01) (Photorhabdus luminescens subsp. laumondii).